Here is a 341-residue protein sequence, read N- to C-terminus: UDP-N-acetylenolpyruvoylglucosamine reductase (341 aa).

The FAD-binding PCMH-type domain maps to valine 15 to threonine 185. Residue arginine 161 is part of the active site. Serine 231 acts as the Proton donor in catalysis. Glutamate 327 is a catalytic residue.

This sequence belongs to the MurB family. FAD is required as a cofactor.

It is found in the cytoplasm. The catalysed reaction is UDP-N-acetyl-alpha-D-muramate + NADP(+) = UDP-N-acetyl-3-O-(1-carboxyvinyl)-alpha-D-glucosamine + NADPH + H(+). The protein operates within cell wall biogenesis; peptidoglycan biosynthesis. In terms of biological role, cell wall formation. The polypeptide is UDP-N-acetylenolpyruvoylglucosamine reductase (Shewanella oneidensis (strain ATCC 700550 / JCM 31522 / CIP 106686 / LMG 19005 / NCIMB 14063 / MR-1)).